The following is a 336-amino-acid chain: Plant-specific TFIIB-related protein 2 (336 aa).

A TFIIB-type zinc finger spans residues 2 to 34; the sequence is EEETCLDCKRPTIMVVDHSSGDTICSECGLVLE. 4 residues coordinate Zn(2+): C6, C9, C26, and C29.

As to expression, specifically expressed in reproductive organs and seeds.

Its subcellular location is the nucleus. Its function is as follows. Plant-specific TFIIB-related protein involved in the regulation of endosperm proliferation during the syncytial phase of endosperm development. Does not contribute to RNA polymerase IV or V activities in reproductive tissues. This is Plant-specific TFIIB-related protein 2 from Arabidopsis thaliana (Mouse-ear cress).